The sequence spans 388 residues: Nitric oxide reductase FlRd-NAD(+) reductase (388 aa).

The protein belongs to the FAD-dependent oxidoreductase family. FAD is required as a cofactor.

The protein localises to the cytoplasm. The catalysed reaction is 2 reduced [nitric oxide reductase rubredoxin domain] + NAD(+) + H(+) = 2 oxidized [nitric oxide reductase rubredoxin domain] + NADH. It functions in the pathway nitrogen metabolism; nitric oxide reduction. Functionally, one of at least two accessory proteins for anaerobic nitric oxide (NO) reductase. Reduces the rubredoxin moiety of NO reductase. The sequence is that of Nitric oxide reductase FlRd-NAD(+) reductase from Aeromonas hydrophila subsp. hydrophila (strain ATCC 7966 / DSM 30187 / BCRC 13018 / CCUG 14551 / JCM 1027 / KCTC 2358 / NCIMB 9240 / NCTC 8049).